We begin with the raw amino-acid sequence, 377 residues long: Cytochrome c peroxidase, mitochondrial (377 aa).

The transit peptide at 1-17 directs the protein to the mitochondrion; sequence MSFRAPNLIRSAAGRRA. The active-site Proton acceptor is the His138. His261 contacts heme b. The Tryptophan radical intermediate role is filled by Trp277.

It belongs to the peroxidase family. Cytochrome c peroxidase subfamily. As to quaternary structure, forms a one-to-one complex with cytochrome c. The cofactor is heme b.

It is found in the mitochondrion matrix. The protein localises to the mitochondrion intermembrane space. The enzyme catalyses 2 Fe(II)-[cytochrome c] + H2O2 + 2 H(+) = 2 Fe(III)-[cytochrome c] + 2 H2O. In terms of biological role, destroys radicals which are normally produced within the cells and which are toxic to biological systems. This chain is Cytochrome c peroxidase, mitochondrial (CCP1), found in Cryptococcus neoformans var. neoformans serotype D (strain JEC21 / ATCC MYA-565) (Filobasidiella neoformans).